The following is a 328-amino-acid chain: NADH-quinone oxidoreductase subunit H 2 (328 aa).

8 helical membrane-spanning segments follow: residues 3-23 (LIVA…ILLL), 77-97 (FLFK…FAAI), 119-139 (VALL…IFGG), 165-185 (MGFA…LDIV), 191-211 (VWNV…GLAE), 250-270 (MVLV…GVLI), 272-292 (LPPL…FMWF), and 307-327 (IGWK…GVVF).

Belongs to the complex I subunit 1 family. As to quaternary structure, NDH-1 is composed of 14 different subunits. Subunits NuoA, H, J, K, L, M, N constitute the membrane sector of the complex.

Its subcellular location is the cell inner membrane. It carries out the reaction a quinone + NADH + 5 H(+)(in) = a quinol + NAD(+) + 4 H(+)(out). NDH-1 shuttles electrons from NADH, via FMN and iron-sulfur (Fe-S) centers, to quinones in the respiratory chain. The immediate electron acceptor for the enzyme in this species is believed to be ubiquinone. Couples the redox reaction to proton translocation (for every two electrons transferred, four hydrogen ions are translocated across the cytoplasmic membrane), and thus conserves the redox energy in a proton gradient. This subunit may bind ubiquinone. This chain is NADH-quinone oxidoreductase subunit H 2, found in Rhizobium meliloti (strain 1021) (Ensifer meliloti).